The primary structure comprises 242 residues: UPF0246 protein SSA_1395 (242 aa).

The protein belongs to the UPF0246 family.

The polypeptide is UPF0246 protein SSA_1395 (Streptococcus sanguinis (strain SK36)).